We begin with the raw amino-acid sequence, 268 residues long: Tryptophan synthase alpha chain (268 aa).

Active-site proton acceptor residues include glutamate 49 and aspartate 60.

This sequence belongs to the TrpA family. In terms of assembly, tetramer of two alpha and two beta chains.

It carries out the reaction (1S,2R)-1-C-(indol-3-yl)glycerol 3-phosphate + L-serine = D-glyceraldehyde 3-phosphate + L-tryptophan + H2O. Its pathway is amino-acid biosynthesis; L-tryptophan biosynthesis; L-tryptophan from chorismate: step 5/5. Its function is as follows. The alpha subunit is responsible for the aldol cleavage of indoleglycerol phosphate to indole and glyceraldehyde 3-phosphate. The sequence is that of Tryptophan synthase alpha chain from Escherichia coli O6:K15:H31 (strain 536 / UPEC).